The following is a 545-amino-acid chain: Probable intron-encoded endonuclease 4 (545 aa).

A run of 7 helical transmembrane segments spans residues 1 to 21 (MYLS…FFGR), 30 to 50 (LITC…FFEV), 81 to 101 (LTVA…IYSI), 119 to 139 (LFTF…MFVG), 140 to 160 (WEGV…RIAA), 177 to 197 (FLTI…YATV), and 200 to 220 (LAPY…LIGA). The ndh-5 exons 1 and 2 encoded stretch occupies residues 1–239 (MYLSIIILPL…HVWLPMAMEG (239 aa)). Positions 240–545 (FFSRAFLKLH…NNINKSDYNK (306 aa)) are ndh-5 intron 2 encoded.

It in the N-terminal section; belongs to the complex I subunit 5 family. This sequence in the C-terminal section; belongs to the LAGLIDADG endonuclease family.

Its subcellular location is the mitochondrion membrane. Mitochondrial DNA endonuclease involved in intron homing. The polypeptide is Probable intron-encoded endonuclease 4 (Neurospora crassa (strain ATCC 24698 / 74-OR23-1A / CBS 708.71 / DSM 1257 / FGSC 987)).